A 155-amino-acid polypeptide reads, in one-letter code: Large ribosomal subunit protein eL24B (155 aa).

Residue Ser-7 is modified to Phosphoserine. Residues Glu-66–Arg-155 form a disordered region. The span at Leu-89–Lys-129 shows a compositional bias: basic and acidic residues.

Belongs to the eukaryotic ribosomal protein eL24 family. As to quaternary structure, component of the large ribosomal subunit (LSU). Mature yeast ribosomes consist of a small (40S) and a large (60S) subunit. The 40S small subunit contains 1 molecule of ribosomal RNA (18S rRNA) and 33 different proteins (encoded by 57 genes). The large 60S subunit contains 3 rRNA molecules (25S, 5.8S and 5S rRNA) and 46 different proteins (encoded by 81 genes).

The protein localises to the cytoplasm. In terms of biological role, component of the ribosome, a large ribonucleoprotein complex responsible for the synthesis of proteins in the cell. The small ribosomal subunit (SSU) binds messenger RNAs (mRNAs) and translates the encoded message by selecting cognate aminoacyl-transfer RNA (tRNA) molecules. The large subunit (LSU) contains the ribosomal catalytic site termed the peptidyl transferase center (PTC), which catalyzes the formation of peptide bonds, thereby polymerizing the amino acids delivered by tRNAs into a polypeptide chain. The nascent polypeptides leave the ribosome through a tunnel in the LSU and interact with protein factors that function in enzymatic processing, targeting, and the membrane insertion of nascent chains at the exit of the ribosomal tunnel. This chain is Large ribosomal subunit protein eL24B, found in Saccharomyces cerevisiae (strain ATCC 204508 / S288c) (Baker's yeast).